The primary structure comprises 570 residues: Phytoene desaturase (570 aa).

A helical membrane pass occupies residues 547 to 567 (LFQGFLGALVAILLAYYYLVI).

It belongs to the carotenoid/retinoid oxidoreductase family. NAD(+) is required as a cofactor.

The protein localises to the membrane. It catalyses the reaction 15-cis-phytoene + A = all-trans-phytofluene + AH2. The enzyme catalyses all-trans-phytofluene + A = all-trans-zeta-carotene + AH2. The catalysed reaction is all-trans-zeta-carotene + A = all-trans-neurosporene + AH2. It carries out the reaction all-trans-neurosporene + A = all-trans-lycopene + AH2. The protein operates within carotenoid biosynthesis. Phytoene desaturase; part of the car gene cluster that mediates the biosynthesis of neurosporaxanthin, a carboxylic apocarotenoid acting as an essential protective pigments and leading to orange pigmentation. Converts phytoene into lycopene via the intermediates phytofluene, zeta-carotene and neurosporene; and further desaturates gamma-carotene into torulene. Neurosporaxanthin is synthesized from geranyl-geranyl pyrophosphate (GGPP) through several enzymatic activities. Phytoene synthase activity performed by the bifunctional enzyme carAR first produces phytoene from geranyl-geranyl pyrophosphate (GGPP). The phytoene dehydrogenase carB then introduces 4 desaturations to lead to lycopene which is substrate of the carotene cyclase activity of carAR that leads to the production of gamma-carotene. CarB then performs a 5th desaturation reaction to yield torulene. Torulene is the substrate of the dioxidase carT that breaks the molecule, removing five carbon atoms to yield beta-apo-4'-carotenal, whereas the aldehyde dehydrogenase carD mediates the last step by converting beta-apo-4'-carotenal into neurosporaxanthin. In Fusarium fujikuroi (Bakanae and foot rot disease fungus), this protein is Phytoene desaturase.